The sequence spans 75 residues: uncharacterized protein (75 aa).

This is an uncharacterized protein from Vaccinia virus (strain Copenhagen) (VACV).